Reading from the N-terminus, the 349-residue chain is 3-dehydroquinate synthase (349 aa).

NAD(+) contacts are provided by residues 63–68 (DGEDYK), 97–101 (GVIGD), 121–122 (TT), K134, K143, and 161–164 (FLQT). Zn(2+) contacts are provided by E176, H235, and H252.

It belongs to the sugar phosphate cyclases superfamily. Dehydroquinate synthase family. The cofactor is Co(2+). Zn(2+) is required as a cofactor. Requires NAD(+) as cofactor.

Its subcellular location is the cytoplasm. The catalysed reaction is 7-phospho-2-dehydro-3-deoxy-D-arabino-heptonate = 3-dehydroquinate + phosphate. It participates in metabolic intermediate biosynthesis; chorismate biosynthesis; chorismate from D-erythrose 4-phosphate and phosphoenolpyruvate: step 2/7. In terms of biological role, catalyzes the conversion of 3-deoxy-D-arabino-heptulosonate 7-phosphate (DAHP) to dehydroquinate (DHQ). This Nitratiruptor sp. (strain SB155-2) protein is 3-dehydroquinate synthase.